The following is a 258-amino-acid chain: MRKIFLPLLLVALSPVAHSEGVQEVEIDAPLSGWHPAEGEDASFSQSINYPASSVNMADDQNISAQIRGKIKNYAAAGKVQQGRLVVNGASMPQRIESDGSFARPYIFTEGSNSVQVISPDGQSRQKMQFYSTPGTGTIRARLRLVLSWDTDNTDLDLHVVTPDGEHAWYGNTVLKNSGALDMDVTTGYGPEIFAMPAPIHGRYQVYINYYGGRSETELTTAQLTLITDEGSVNEKQETFIVPMRNAGELTLVKSFDW.

An N-terminal signal peptide occupies residues 1–19 (MRKIFLPLLLVALSPVAHS).

This is an uncharacterized protein from Escherichia coli (strain K12).